The sequence spans 1461 residues: Selection and upkeep of intraepithelial T-cells protein 5 (1461 aa).

Positions 1 to 24 (MGAVGIPLTAHCVVLFLLQMVALS) are cleaved as a signal peptide. Residues 25-1306 (SEQFTVNGLE…CNKRNPFWKK (1282 aa)) lie on the Extracellular side of the membrane. An Ig-like V-type domain is found at 26–139 (EQFTVNGLES…FYEEHIIDVK (114 aa)). 2 disulfides stabilise this stretch: Cys49–Cys123 and Cys163–Cys217. The Ig-like C1-type domain occupies 142-231 (ATSSDIQILM…FVTHQEESIS (90 aa)). The N-linked (GlcNAc...) asparagine glycan is linked to Asn200. Residues 1307-1327 (YALDLGISVFTIIVVTLIMHL) traverse the membrane as a helical segment. Topologically, residues 1328–1345 (KQREADQHFELNTLWSKD) are cytoplasmic. The chain crosses the membrane as a helical span at residues 1346-1366 (TSVILCVLIMFNNRLKALIYF). At 1367 to 1387 (RLYGFSPPGKAHKYIVNYILR) the chain is on the extracellular side. A helical transmembrane segment spans residues 1388–1408 (FSHPVFCIVYSATILYMYLQI). Topologically, residues 1409–1427 (QNKDSLFSLYNSWMVEMEM) are cytoplasmic. Residues 1428 to 1448 (VLIFLLVIFNVKNIATVLLYF) traverse the membrane as a helical segment. Residues 1449–1461 (DSTTLRLFFWIKG) lie on the Extracellular side of the membrane.

The protein belongs to the SKINT family. As to expression, expressed in skin and, to a lower extent, testis.

Its subcellular location is the membrane. Functionally, may act by engaging a cell surface molecule on immature T-cells in the embryonic thymus. The polypeptide is Selection and upkeep of intraepithelial T-cells protein 5 (Skint5) (Mus musculus (Mouse)).